The sequence spans 109 residues: Nucleoid-associated protein LBUL_1514 (109 aa).

It belongs to the YbaB/EbfC family. Homodimer.

It is found in the cytoplasm. The protein resides in the nucleoid. Functionally, binds to DNA and alters its conformation. May be involved in regulation of gene expression, nucleoid organization and DNA protection. The protein is Nucleoid-associated protein LBUL_1514 of Lactobacillus delbrueckii subsp. bulgaricus (strain ATCC BAA-365 / Lb-18).